Reading from the N-terminus, the 653-residue chain is Sodium-dependent nutrient amino acid transporter 1 (653 aa).

Residues 1–55 (MELKGVHQQNGTSNGTGAAGTEGESPPPAPAPATAEAAASLETTTEKVDAEQQKT) are disordered. The Cytoplasmic portion of the chain corresponds to 1–59 (MELKGVHQQNGTSNGTGAAGTEGESPPPAPAPATAEAAASLETTTEKVDAEQQKTERTN). 2 stretches are compositionally biased toward low complexity: residues 10-24 (NGTS…TEGE) and 32-43 (PATAEAAASLET). A compositionally biased stretch (basic and acidic residues) spans 44–55 (TTEKVDAEQQKT). The next 4 helical transmembrane spans lie at 60–80 (WGNG…LGNV), 93–113 (GAFL…MYYL), 125–145 (TVKI…QAFA), and 146–166 (TICI…YLFV). N-linked (GlcNAc...) asparagine glycosylation is found at asparagine 202 and asparagine 205. The next 9 membrane-spanning stretches (helical) occupy residues 241 to 261 (PDWK…LVIM), 270 to 290 (AAYF…VRAV), 319 to 339 (AVVQ…MFAS), 353 to 373 (IVTT…FAIL), 413 to 433 (LFSV…IVAL), 459 to 479 (ICGF…ILTL), 486 to 506 (TYVV…IYGM), 528 to 548 (CWSF…MVTI), and 565 to 585 (AGWL…MWYI).

The protein belongs to the sodium:neurotransmitter symporter (SNF) (TC 2.A.22) family.

It localises to the membrane. Functionally, unusual broad substrate spectrum amino acid:sodium cotransporter that promotes absorption of the D isomers of essential amino acids. Neutral amino acids are the preferred substrates, especially methionine and phenylalanine. The chain is Sodium-dependent nutrient amino acid transporter 1 from Drosophila pseudoobscura pseudoobscura (Fruit fly).